The sequence spans 37 residues: Mu-agatoxin-Aa1e (37 aa).

4 cysteine pairs are disulfide-bonded: Cys2/Cys18, Cys9/Cys23, Cys17/Cys33, and Cys25/Cys31. Asn37 carries the post-translational modification Asparagine amide.

It belongs to the neurotoxin 07 (Beta/delta-agtx) family. 03 (aga-4) subfamily. Aga sub-subfamily. As to expression, expressed by the venom gland.

The protein localises to the secreted. In terms of biological role, insecticidal neurotoxin that induces an irreversible spastic paralysis when injected into insects. Modifies presynaptic voltage-gated sodium channels (Nav), causing them to open at the normal resting potential of the nerve. This leads to spontaneous release of neurotransmitter and repetitive action potentials in motor neurons. This is Mu-agatoxin-Aa1e from Agelenopsis aperta (North American funnel-web spider).